The primary structure comprises 464 residues: tRNA modification GTPase MnmE (464 aa).

(6S)-5-formyl-5,6,7,8-tetrahydrofolate is bound by residues arginine 27, glutamate 90, and lysine 129. The TrmE-type G domain occupies 222–384 (GIALVLAGSV…LYDKIRSLTC (163 aa)). GTP contacts are provided by residues 232-237 (NVGKSS), 251-257 (SSYAGTT), and 276-279 (DTAG). Residues serine 236 and threonine 257 each coordinate Mg(2+). Lysine 464 lines the (6S)-5-formyl-5,6,7,8-tetrahydrofolate pocket.

It belongs to the TRAFAC class TrmE-Era-EngA-EngB-Septin-like GTPase superfamily. TrmE GTPase family. As to quaternary structure, homodimer. Heterotetramer of two MnmE and two MnmG subunits. It depends on K(+) as a cofactor.

The protein resides in the cytoplasm. Its function is as follows. Exhibits a very high intrinsic GTPase hydrolysis rate. Involved in the addition of a carboxymethylaminomethyl (cmnm) group at the wobble position (U34) of certain tRNAs, forming tRNA-cmnm(5)s(2)U34. This Borrelia turicatae (strain 91E135) protein is tRNA modification GTPase MnmE.